The primary structure comprises 299 residues: tRNA-cytidine(32) 2-sulfurtransferase (299 aa).

The short motif at 56 to 61 is the PP-loop motif element; it reads SGGKDS. Residues C131, C134, and C222 each contribute to the [4Fe-4S] cluster site.

It belongs to the TtcA family. In terms of assembly, homodimer. It depends on Mg(2+) as a cofactor. Requires [4Fe-4S] cluster as cofactor.

The protein resides in the cytoplasm. The enzyme catalyses cytidine(32) in tRNA + S-sulfanyl-L-cysteinyl-[cysteine desulfurase] + AH2 + ATP = 2-thiocytidine(32) in tRNA + L-cysteinyl-[cysteine desulfurase] + A + AMP + diphosphate + H(+). It participates in tRNA modification. In terms of biological role, catalyzes the ATP-dependent 2-thiolation of cytidine in position 32 of tRNA, to form 2-thiocytidine (s(2)C32). The sulfur atoms are provided by the cysteine/cysteine desulfurase (IscS) system. This chain is tRNA-cytidine(32) 2-sulfurtransferase, found in Xylella fastidiosa (strain M12).